The sequence spans 150 residues: Histone H2B.2 (150 aa).

2 stretches are compositionally biased toward basic and acidic residues: residues 1–21 and 33–49; these read MAPKAEKKPAEKKPAEEKAGE and EKRLPASKGEKGGEGKK. The segment at 1 to 58 is disordered; it reads MAPKAEKKPAEKKPAEEKAGEKAPAAGKKPKAEKRLPASKGEKGGEGKKERGRKKAKK. N6-acetyllysine occurs at positions 7 and 34. Residue lysine 146 forms a Glycyl lysine isopeptide (Lys-Gly) (interchain with G-Cter in ubiquitin) linkage.

This sequence belongs to the histone H2B family. The nucleosome is a histone octamer containing two molecules each of H2A, H2B, H3 and H4 assembled in one H3-H4 heterotetramer and two H2A-H2B heterodimers. The octamer wraps approximately 147 bp of DNA. Can be acetylated to form H2BK6ac and H2BK33ac. Post-translationally, monoubiquitinated by BRE1 to form H2BK143ub1 and deubiquitinated by UBP26. Required for heterochromatic histone H3 di- and trimethylation at H3K4me. May give a specific tag for epigenetic transcriptional activation.

It is found in the nucleus. It localises to the chromosome. In terms of biological role, core component of nucleosome. Nucleosomes wrap and compact DNA into chromatin, limiting DNA accessibility to the cellular machineries which require DNA as a template. Histones thereby play a central role in transcription regulation, DNA repair, DNA replication and chromosomal stability. DNA accessibility is regulated via a complex set of post-translational modifications of histones, also called histone code, and nucleosome remodeling. The sequence is that of Histone H2B.2 (H2B.2) from Oryza sativa subsp. indica (Rice).